Reading from the N-terminus, the 64-residue chain is UPF0434 protein Bcen_1934 (64 aa).

This sequence belongs to the UPF0434 family.

The sequence is that of UPF0434 protein Bcen_1934 from Burkholderia orbicola (strain AU 1054).